A 267-amino-acid chain; its full sequence is Glutamate 5-kinase (267 aa).

Residue Lys-15 coordinates ATP. 3 residues coordinate substrate: Ser-55, Asp-142, and Asn-158. ATP contacts are provided by residues 178–179 (SD) and 220–226 (TGGMATK).

This sequence belongs to the glutamate 5-kinase family.

The protein resides in the cytoplasm. It catalyses the reaction L-glutamate + ATP = L-glutamyl 5-phosphate + ADP. Its pathway is amino-acid biosynthesis; L-proline biosynthesis; L-glutamate 5-semialdehyde from L-glutamate: step 1/2. Catalyzes the transfer of a phosphate group to glutamate to form L-glutamate 5-phosphate. The protein is Glutamate 5-kinase of Ligilactobacillus salivarius (strain UCC118) (Lactobacillus salivarius).